Reading from the N-terminus, the 347-residue chain is UDP-galactose/UDP-glucose transporter 5 (347 aa).

8 consecutive transmembrane segments (helical) span residues 17 to 37 (LWKA…YGLL), 57 to 77 (LFLV…ALLA), 116 to 136 (VQTL…TLIM), 143 to 163 (FDYL…LFPA), 177 to 197 (TVWG…TSTF), 218 to 238 (ICSS…LPAV), 247 to 267 (CLFD…FISY), and 293 to 313 (CIWF…IVFG). The interval 325–347 (SEKPPAAQELPRDEEAQPLKGNP) is disordered.

Belongs to the nucleotide-sugar transporter family. UDP-galactose:UMP antiporter (TC 2.A.7.11) subfamily.

The protein resides in the membrane. Its function is as follows. Sugar transporter involved in the transport of nucleotide-sugars from cytoplasm into the Golgi and/or the endoplasmic reticulum. This is UDP-galactose/UDP-glucose transporter 5 from Arabidopsis thaliana (Mouse-ear cress).